A 195-amino-acid polypeptide reads, in one-letter code: Molybdenum cofactor guanylyltransferase (195 aa).

GTP contacts are provided by residues 10 to 12, lysine 23, asparagine 51, aspartate 69, and aspartate 99; that span reads LAG. Aspartate 99 is a Mg(2+) binding site.

The protein belongs to the MobA family. As to quaternary structure, monomer. The cofactor is Mg(2+).

Its subcellular location is the cytoplasm. The enzyme catalyses Mo-molybdopterin + GTP + H(+) = Mo-molybdopterin guanine dinucleotide + diphosphate. Its function is as follows. Transfers a GMP moiety from GTP to Mo-molybdopterin (Mo-MPT) cofactor (Moco or molybdenum cofactor) to form Mo-molybdopterin guanine dinucleotide (Mo-MGD) cofactor. This is Molybdenum cofactor guanylyltransferase from Yersinia pseudotuberculosis serotype O:1b (strain IP 31758).